A 578-amino-acid polypeptide reads, in one-letter code: Longifolene synthase (578 aa).

Asp-331, Asp-335, and Asp-475 together coordinate Mg(2+). A DDXXD motif motif is present at residues 331–335 (DDLYD).

The protein belongs to the terpene synthase family. Tpsd subfamily. Requires Mg(2+) as cofactor. Mn(2+) is required as a cofactor.

It catalyses the reaction (2E,6E)-farnesyl diphosphate = longifolene + diphosphate. It participates in sesquiterpene biosynthesis. Its pathway is terpene metabolism; oleoresin biosynthesis. Terpene synthase (TPS) involved in the biosynthesis of sesquiterpene natural products included in conifer oleoresin secretions and volatile emissions; these compounds contribute to biotic and abiotic stress defense against herbivores and pathogens. Catalyzes the conversion of (2E,6E)-farnesyl diphosphate (FPP) to longifolene. In Picea engelmannii x Picea glauca (Hybrid white spruce), this protein is Longifolene synthase.